The primary structure comprises 406 residues: MKQTVWNHLKLCPQGDPAQTIDDAAIAVENGRIVWLGAVRELPAQYAAWPREDLGGAWVTPGLVDCHTHLVYGGQRADEFAQRLAGVSYEEIAKQGGGIVSTVRATRAADEASLFAQSAARLEAMLAEGVTAIEIKSGYGLDLQSERKMLRVARQLGERYPVKVYTTFLGAHALPPEFASRADDYIDEVCEGMLPALADEGLVDAVDVFCERIGFSLEQSERVFNAAARHGLPVKMHAEQLSNAGGTALAARYGALSADHLEFLDEAGVAAMKEAGTVAVLLPGAYYFIRETQLPPVELLRRYGVPIAISTDSNPGTSPATSLPLMMNMATTLFRMTVPEVLRGVTCHAAQALGKADTHGTLAVGRAADFAVWSVQSLAELAYWIGRPLCERVVRGGETVHLRHAR.

Residues H67 and H69 each coordinate Fe(3+). Positions 67 and 69 each coordinate Zn(2+). The 4-imidazolone-5-propanoate site is built by R76, Y139, and H172. Y139 serves as a coordination point for N-formimidoyl-L-glutamate. H237 lines the Fe(3+) pocket. Zn(2+) is bound at residue H237. Q240 is a binding site for 4-imidazolone-5-propanoate. D312 lines the Fe(3+) pocket. D312 provides a ligand contact to Zn(2+). Positions 314 and 316 each coordinate N-formimidoyl-L-glutamate. T317 is a 4-imidazolone-5-propanoate binding site.

This sequence belongs to the metallo-dependent hydrolases superfamily. HutI family. Zn(2+) is required as a cofactor. It depends on Fe(3+) as a cofactor.

The protein resides in the cytoplasm. It catalyses the reaction 4-imidazolone-5-propanoate + H2O = N-formimidoyl-L-glutamate. Its pathway is amino-acid degradation; L-histidine degradation into L-glutamate; N-formimidoyl-L-glutamate from L-histidine: step 3/3. In terms of biological role, catalyzes the hydrolytic cleavage of the carbon-nitrogen bond in imidazolone-5-propanoate to yield N-formimidoyl-L-glutamate. It is the third step in the universal histidine degradation pathway. The polypeptide is Imidazolonepropionase (Paraburkholderia phymatum (strain DSM 17167 / CIP 108236 / LMG 21445 / STM815) (Burkholderia phymatum)).